A 235-amino-acid polypeptide reads, in one-letter code: Large ribosomal subunit protein uL1 (235 aa).

The tract at residues 1–22 is disordered; that stretch reads MSKNSKAYRAAAEKVDRSNPYT.

This sequence belongs to the universal ribosomal protein uL1 family. In terms of assembly, part of the 50S ribosomal subunit.

Functionally, binds directly to 23S rRNA. The L1 stalk is quite mobile in the ribosome, and is involved in E site tRNA release. Protein L1 is also a translational repressor protein, it controls the translation of the L11 operon by binding to its mRNA. This is Large ribosomal subunit protein uL1 from Mycobacterium ulcerans (strain Agy99).